Consider the following 335-residue polypeptide: Peflin (335 aa).

A compositionally biased stretch (basic and acidic residues) spans 23-37; it reads AMEETRREFEKEKQR. Positions 23-92 are disordered; it reads AMEETRREFE…SPRHTKTPVD (70 aa). Over residues 43 to 53 the composition is skewed to polar residues; sequence VTQAQTPNTRV. 5 consecutive EF-hand domains span residues 144–192, 198–223, 224–259, 260–300, and 301–332; these read KVAP…DDNS, SVDA…IALY, KRVK…LGYL, IPFE…LMRL, and TKLF…LGRF. Residues Asp-170, Arg-176, and Glu-181 each contribute to the Ca(2+) site. Ca(2+)-binding residues include Asp-237, Asn-239, Ser-241, Thr-243, and Glu-248.

In terms of assembly, homodimer.

The protein resides in the cytoplasm. It localises to the nucleus. Its subcellular location is the bud tip. The protein localises to the bud neck. Functionally, calcium-binding protein that is required for polar bud growth and cell wall abscission. Can also bind zinc ions. The sequence is that of Peflin (PEF1) from Saccharomyces cerevisiae (strain ATCC 204508 / S288c) (Baker's yeast).